Reading from the N-terminus, the 115-residue chain is Allergen Tha p 2 (115 aa).

An N-terminal signal peptide occupies residues Met-1 to Ser-15.

This chain is Allergen Tha p 2, found in Thaumetopoea pityocampa (Pine processionary moth).